We begin with the raw amino-acid sequence, 37 residues long: MKVRPSVKPICEKCKVIRRKGKIRIICENPKHKQRQG.

Belongs to the bacterial ribosomal protein bL36 family.

The chain is Large ribosomal subunit protein bL36 from Caldicellulosiruptor saccharolyticus (strain ATCC 43494 / DSM 8903 / Tp8T 6331).